We begin with the raw amino-acid sequence, 140 residues long: NADPH-dependent 7-cyano-7-deazaguanine reductase (140 aa).

The active-site Thioimide intermediate is the cysteine 49. The active-site Proton donor is aspartate 56. Residues isoleucine 71–leucine 73 and histidine 90–glutamate 91 contribute to the substrate site.

The protein belongs to the GTP cyclohydrolase I family. QueF type 1 subfamily.

Its subcellular location is the cytoplasm. The enzyme catalyses 7-aminomethyl-7-carbaguanine + 2 NADP(+) = 7-cyano-7-deazaguanine + 2 NADPH + 3 H(+). It functions in the pathway tRNA modification; tRNA-queuosine biosynthesis. Its function is as follows. Catalyzes the NADPH-dependent reduction of 7-cyano-7-deazaguanine (preQ0) to 7-aminomethyl-7-deazaguanine (preQ1). The protein is NADPH-dependent 7-cyano-7-deazaguanine reductase of Prochlorococcus marinus (strain NATL2A).